Here is a 688-residue protein sequence, read N- to C-terminus: MSAELFLEIGTEEIPAGFLPTAMADLERLIRKELETGRIGFETVRTFATPRRLVLAVTGVASGQARQEVTASGPSVSVAFDADGNPTKAALGFARSNGVEVSDLERRETDKGEYLFVSKVVEGRPTGELLPEMLPRIIAAIPFKKSMRWKDLDIRFARPMHWIVALFDGQVVPFSYGNLTSGNLSYGHRFMAPDAFEVSSLEQYLVEAEKHFVIVDPVKRRQIISDQLAEVVGRCGGKLNPDDDLLDEVAFLVEYPAAVMGGFEDSYLQLPPELLITVMREHQRYFTVVDDSGKLLPRFITISNTRAEDLTVVQQGNERVLRARLSDAMFFWNEDRKVKLESRLDALKNVVYQAKLGTSYEKVMRFKTLAVELAQQQVPEVVELTERAASLAKCDLETGMVFEFTELQGVMGREYALLDGEDPRVARAIFEHYLPVQAGGELPGDDVGAFVSIADKIDSICGCFGVGLIPTGTADPFALRRSAIGILNIILDRGYRLSLPALVERSLGLLADKLTRPATEVAADVLEFLRLRFFNMLTAQGLPNDVVDAVLSAAFEDPVDALQRVKGLASFREEGEFEALAVTFKRVVNIVKGGVDTSVDSALFEADCEAGLFDALQNVTGRFEQFVAEGAYLDALRTVGGLRSPVDALFEGVMVMSPDEAVKTNRLALLTAVARLFQGIADFSKIAA.

Belongs to the class-II aminoacyl-tRNA synthetase family. In terms of assembly, tetramer of two alpha and two beta subunits.

The protein resides in the cytoplasm. The catalysed reaction is tRNA(Gly) + glycine + ATP = glycyl-tRNA(Gly) + AMP + diphosphate. This is Glycine--tRNA ligase beta subunit from Syntrophotalea carbinolica (strain DSM 2380 / NBRC 103641 / GraBd1) (Pelobacter carbinolicus).